The sequence spans 393 residues: Protein TsgA (393 aa).

The next 12 membrane-spanning stretches (helical) occupy residues 11–31, 51–71, 78–98, 101–121, 134–154, 162–182, 206–226, 245–265, 273–293, 298–318, 332–352, and 361–381; these read WISFLSYALTGALVIVTGMVM, FLNAGILISIFLNAWLMEIVP, FGFILMVLAVAGLMFSHSLAL, AAMFVLGLVSGITMSIGTFLI, LLFTDSFFSMAGMIFPMVAAF, WYWVYACIGLVYLAIFILTFG, IGVLFLAVAALCYILGQLGFI, ALVSDFWMSYMFGMWAFSFIL, ILTVLAGMAAVLMYLFITGTQ, WFILTLGFFSSAIYTSIITLG, FILTCGTIGTMLTFVVTGPIV, and LLTANGLYAVVFVMCFALGFV.

Belongs to the major facilitator superfamily. TsgA family.

It localises to the cell inner membrane. This Salmonella heidelberg (strain SL476) protein is Protein TsgA.